Consider the following 250-residue polypeptide: tRNA (guanine-N(1)-)-methyltransferase (250 aa).

S-adenosyl-L-methionine is bound by residues Gly108 and Leu127 to Leu132.

This sequence belongs to the RNA methyltransferase TrmD family. Homodimer.

It localises to the cytoplasm. It catalyses the reaction guanosine(37) in tRNA + S-adenosyl-L-methionine = N(1)-methylguanosine(37) in tRNA + S-adenosyl-L-homocysteine + H(+). Functionally, specifically methylates guanosine-37 in various tRNAs. In Streptococcus agalactiae serotype Ia (strain ATCC 27591 / A909 / CDC SS700), this protein is tRNA (guanine-N(1)-)-methyltransferase.